The following is a 223-amino-acid chain: MKGYRILIVEDDVMIGDLLQKILQREGYRVIWKTDGADVLSVIQKVDLVIMDVMLPGEDGYQMSAKIKKLGLGIPVIFLSARNDMDSKLQGLQIGEDYMVKPFDPRELLLRMRNMLEHHYGTFTQIKHLYIDAVTKKVFNESLHDEVLFTAIERKIFFYLYENRDSILTKEHFFEYLWQLEDRNPNIVNVHIKKIRAKINDQAGEMIENIYGEGYRLNTVVKK.

A Response regulatory domain is found at 5 to 116; sequence RILIVEDDVM…ELLLRMRNML (112 aa). Aspartate 52 carries the 4-aspartylphosphate modification. Positions 121 to 219 form a DNA-binding region, ompR/PhoB-type; the sequence is GTFTQIKHLY…IYGEGYRLNT (99 aa).

Phosphorylated by YbdK.

The protein localises to the cytoplasm. Member of the two-component regulatory system YbdK/YbdJ. This is an uncharacterized protein from Bacillus subtilis (strain 168).